Here is a 999-residue protein sequence, read N- to C-terminus: Tyrosine-protein kinase Mer (999 aa).

The first 20 residues, 1–20 (MGPAPLPLLLGLFLPALWRR), serve as a signal peptide directing secretion. Over 21–505 (AITEAREEAK…PGNADPVLII (485 aa)) the chain is Extracellular. Ig-like C2-type domains follow at residues 81–186 (PQVT…EIVS) and 197–273 (PHFT…LTVS). Asn114, Asn170, Asn207, Asn215, Asn234, Asn294, Asn316, Asn329, Asn336, Asn354, Asn389, Asn395, Asn442, and Asn454 each carry an N-linked (GlcNAc...) asparagine glycan. Cys115 and Cys175 are disulfide-bonded. Cys218 and Cys262 form a disulfide bridge. Fibronectin type-III domains lie at 286–381 (PPTE…TTEG) and 386–484 (APLN…PAHG). Residues 506-526 (FGCFCGFILIGLILYISLAIR) form a helical membrane-spanning segment. Residues 527–999 (KRVQETKFGN…DSSEGSEVLM (473 aa)) lie on the Cytoplasmic side of the membrane. Phosphoserine is present on Ser543. In terms of domain architecture, Protein kinase spans 587–858 (LILGKILGEG…VLRLQLEKLL (272 aa)). ATP contacts are provided by residues 593-601 (LGEGEFGSV) and Lys615. The active-site Proton acceptor is the Asp723. A phosphotyrosine; by autocatalysis mark is found at Tyr749, Tyr753, Tyr754, and Tyr872. The residue at position 935 (Ser935) is a Phosphoserine.

It belongs to the protein kinase superfamily. Tyr protein kinase family. AXL/UFO subfamily. Interacts (upon activation) with TNK2; stimulates TNK2 autophosphorylation. Interacts (via N-terminus) with extracellular ligands LGALS3, TUB, TULP1 and GAS6. Interacts with VAV1 in a phosphotyrosine-independent manner. Interacts with TIMD4; this interaction enhances TIMD4-mediated efferocytosis. In terms of processing, autophosphorylated on Tyr-749, Tyr-753 and Tyr-754 in the activation loop allowing full activity. Autophosphorylated on Tyr-872 leading to recruitment of downstream partners of the signaling cascade such as PLCG2. In terms of tissue distribution, not expressed in normal B- and T-lymphocytes but is expressed in numerous neoplastic B- and T-cell lines. Highly expressed in testis, ovary, prostate, lung, and kidney, with lower expression in spleen, small intestine, colon, and liver.

It localises to the cell membrane. It carries out the reaction L-tyrosyl-[protein] + ATP = O-phospho-L-tyrosyl-[protein] + ADP + H(+). In terms of biological role, receptor tyrosine kinase that transduces signals from the extracellular matrix into the cytoplasm by binding to several ligands including LGALS3, TUB, TULP1 or GAS6. Regulates many physiological processes including cell survival, migration, differentiation, and phagocytosis of apoptotic cells (efferocytosis). Ligand binding at the cell surface induces autophosphorylation of MERTK on its intracellular domain that provides docking sites for downstream signaling molecules. Following activation by ligand, interacts with GRB2 or PLCG2 and induces phosphorylation of MAPK1, MAPK2, FAK/PTK2 or RAC1. MERTK signaling plays a role in various processes such as macrophage clearance of apoptotic cells, platelet aggregation, cytoskeleton reorganization and engulfment. Functions in the retinal pigment epithelium (RPE) as a regulator of rod outer segments fragments phagocytosis. Also plays an important role in inhibition of Toll-like receptors (TLRs)-mediated innate immune response by activating STAT1, which selectively induces production of suppressors of cytokine signaling SOCS1 and SOCS3. The sequence is that of Tyrosine-protein kinase Mer (MERTK) from Homo sapiens (Human).